Reading from the N-terminus, the 805-residue chain is Probable phosphoketolase (805 aa).

The protein belongs to the XFP family. Thiamine diphosphate is required as a cofactor.

The polypeptide is Probable phosphoketolase (Synechocystis sp. (strain ATCC 27184 / PCC 6803 / Kazusa)).